Here is a 497-residue protein sequence, read N- to C-terminus: MPKQHVYHLHPLGWENDPEEERFKVTTLDYLTVCSYNNYALFFKLEDSEKERAAEILKAGLERTLAQARHYCGTIEKDPGGGHSFTKKRNSTVRFFVQWLDAPEDADKYPSFEDLEKTNFSAVTLGDLEQWSVPPMTYGEKPEAHPDNSPVVSAFKANFIRGGLVFNIHHHHYTNDVMGWAGFVHQLAENCYAAVNGTKHPTWDPLNLDVSRLIKQEPPEDQKIDGPAPPERHPAHQVGMSLLFHLPKSKAAELKAKATPTDGTWISTYDAFSAFIWRNLTRIRAPVFNPDPKSTLYWCEAIDMRRRMHSPKVPPRIQHNVMFAVTSPTAPVTQPTVAQIMSEWSLSELASYIRRLTNSVTQENLDKTLEMVATIRDKTSLNTRVDAQPPLSILQTDHRDANITSADFGFAKPATYRHLLDRITEGVIIVYPPRDPLPESDEGCEFAIFYEKRLAQDLINDDEWSEYFEYRGVDAEDASEAKKANGTNGTNGVNGSS.

Residues Asp221 and Ile224 each coordinate Ca(2+). CoA is bound by residues Lys255 and Asp303. Asp386 contributes to the Ca(2+) binding site. Residue Thr396 coordinates CoA. Asp462 is a binding site for Ca(2+). Residues 477–497 (DASEAKKANGTNGTNGVNGSS) form a disordered region. The segment covering 485-497 (NGTNGTNGVNGSS) has biased composition (low complexity).

The protein belongs to the trichothecene 3-O-acetyltransferase family.

Its pathway is secondary metabolite biosynthesis. Its function is as follows. Acetyltransferase; part of the gene cluster that mediates the biosynthesis of the tetraketides fugralins such as linear fugralin A and cyclic fugralin B, volatile compounds that play a role in the asexual reproductive cycle but are not involved in pathogenicity. One of the key features of fugralins is the presence of a double methyl group, which is only rarely encountered in fungal secondary metabolites. As the fugralins cluster does not contain an independent methyltransferase, the PKS FGR1 is probably responsible for adding two methyl groups to the same carbon atom. Fugralin B is similar to fugralin A except for a cyclization between the carboxylic acid C-8 and the alcohol on C-4 resulting in a six membered lactone ring, probably catalyzed by the cyclase FGR4. The exact role of the individual cluster genes remains unknown and further work is needed to unravel the biosynthetic pathway. The protein is Acetyltransferase FGR3 of Gibberella zeae (strain ATCC MYA-4620 / CBS 123657 / FGSC 9075 / NRRL 31084 / PH-1) (Wheat head blight fungus).